A 621-amino-acid polypeptide reads, in one-letter code: Putative zinc metalloprotease CPn_0344/CP_0416/CPj0344/CpB0350 (621 aa).

His20 is a binding site for Zn(2+). Glu21 is a catalytic residue. Residue His24 coordinates Zn(2+). 3 helical membrane passes run 103-125 (ILVL…SILY), 561-583 (VLNL…WEIV), and 596-613 (ILVP…FLTF).

Belongs to the peptidase M50B family. Zn(2+) is required as a cofactor.

It is found in the cell inner membrane. The sequence is that of Putative zinc metalloprotease CPn_0344/CP_0416/CPj0344/CpB0350 from Chlamydia pneumoniae (Chlamydophila pneumoniae).